An 866-amino-acid polypeptide reads, in one-letter code: E3 ubiquitin-protein ligase RNF216 (866 aa).

3 disordered regions span residues 46–117, 131–161, and 211–240; these read LVTP…NPRS, YTESDPLETQNQSSEDSETELLSNLGESAAL, and EFPGPAFPRPEPQQGGISGPSSPQPAHPLG. Positions 55 to 76 are enriched in acidic residues; sequence EEEDLDDDVILTEDDSEDDYGE. Residues Leu-80, Thr-89, and Lys-100 each participate in a glycyl lysine isopeptide (Lys-Gly) (interchain with G-Cter in SUMO2) cross-link. Residues 137–156 show a composition bias toward polar residues; the sequence is LETQNQSSEDSETELLSNLG. Glycyl lysine isopeptide (Lys-Gly) (interchain with G-Cter in SUMO2) cross-links involve residues Lys-351 and Lys-354. Position 419 is a phosphoserine (Ser-419). Residues Lys-425, Lys-430, Lys-448, Lys-459, and Lys-485 each participate in a glycyl lysine isopeptide (Lys-Gly) (interchain with G-Cter in SUMO2) cross-link. The stretch at 475 to 491 forms a coiled coil; sequence VQQEQEFYEQKIKEMAE. Residues 511-728 are TRIAD supradomain; that stretch reads QLIECRCCYG…SPGAPCQECS (218 aa). Zn(2+)-binding residues include Cys-515, Cys-518, Cys-537, Cys-540, Cys-605, and Cys-608. The RING-type 1 zinc-finger motif lies at 515–564; that stretch reads CRCCYGEFPFEELTQCADAHLFCKECLIRYAQEAVFGSGKLELSCMEGSC. The segment at 583 to 648 adopts an IBR-type zinc-finger fold; sequence YKYYERKAEE…LWKEHNGLTC (66 aa). A Glycyl lysine isopeptide (Lys-Gly) (interchain with G-Cter in SUMO2) cross-link involves residue Lys-619. Residues Cys-623, Cys-628, Cys-633, Cys-636, His-643, and Cys-648 each coordinate Zn(2+). Residues Lys-658 and Lys-666 each participate in a glycyl lysine isopeptide (Lys-Gly) (interchain with G-Cter in SUMO2) cross-link. The Zn(2+) site is built by Cys-675 and Cys-678. The RING-type 2; atypical zinc finger occupies 675-703; sequence CHKCGTGLIKSEGCNRMSCRCGAQMCYLC. Residue Cys-688 is part of the active site. The Zn(2+) site is built by Cys-693, Cys-695, Cys-700, Cys-703, and His-716. Ser-719 carries the phosphoserine; by MAPK1 modification. Residue Cys-724 participates in Zn(2+) binding. Residues 737 to 763 adopt a coiled-coil conformation; sequence TEDDEKLIEEIQKEAEEEQKRKNGENT. Glycyl lysine isopeptide (Lys-Gly) (interchain with G-Cter in SUMO2) cross-links involve residues Lys-765 and Lys-773.

As to quaternary structure, interacts with UBE2L3 and to some extent with UBE2L6. Interacts with TRAF3, TLR3, TLR4, TLR5 and TLR9. Isoform 3/ZIN binds RIPK1. In terms of assembly, (Microbial infection) Isoform 3/ZIN binds RIPK1 and HIV Vif. Auto-ubiquitinated. Post-translationally, phosphorylation at Ser-719 enhances acceptor ubiquitin binding and chain-type specificity towards 'Lys-63' di-ubiquitin but not di-ubiquitin with other linkage types. Ubiquitous, with the highest levels of expression in testis and peripheral blood leukocytes.

It localises to the cytoplasm. The protein resides in the cytoplasmic vesicle. It is found in the clathrin-coated vesicle. The enzyme catalyses S-ubiquitinyl-[E2 ubiquitin-conjugating enzyme]-L-cysteine + [acceptor protein]-L-lysine = [E2 ubiquitin-conjugating enzyme]-L-cysteine + N(6)-ubiquitinyl-[acceptor protein]-L-lysine.. It functions in the pathway protein modification; protein ubiquitination. Allosterically activated by 'Lys-63'-linked di-ubiquitin. In terms of biological role, E3 ubiquitin ligase which accepts ubiquitin from specific E2 ubiquitin-conjugating enzymes, and then transfers it to substrates promoting their ubiquitination. Plays a role in the regulation of antiviral responses by promoting the degradation of TRAF3, TLR4 and TLR9. In turn, down-regulates NF-kappa-B and IRF3 activation as well as beta interferon production. Also participates in the regulation of autophagy by ubiquitinating BECN1 leading to its degradation and autophagy inhibition. Plays a role in ARC-dependent synaptic plasticity by mediating ARC ubiquitination resulting in its rapid proteasomal degradation. Plays aso an essential role in spermatogenesis and male fertility. Mechanistically, regulates meiosis by promoting the degradation of PRKACB through the ubiquitin-mediated lysosome pathway. Modulates the gonadotropin-releasing hormone signal pathway by affecting the stability of STAU2 that is required for the microtubule-dependent transport of neuronal RNA from the cell body to the dendrite. Its function is as follows. Inhibits TNF and IL-1 mediated activation of NF-kappa-B. Promotes TNF and RIP mediated apoptosis. The polypeptide is E3 ubiquitin-protein ligase RNF216 (RNF216) (Homo sapiens (Human)).